Reading from the N-terminus, the 491-residue chain is MGQIVTFFQEVPHVIEEVMNIVLIALSVLAVLKGLYNFATCGLVGLVTFLLLCGRSCTTSLYKGVYELQTLELNMETLNMTMPLSCTKNNSHHYIMVGNETGLELTLTNTSIINHKFCNLSDAHKKNLYDHALMSIISTFHLSIPNFNQYEAMSCDFNGGKISVQYNLSHSYAGDAANHCGTVANGVLQTFMRMAWGGSYIALDSGRGNWDCIMTSYQYLIIQNTTWEDHCQFSRPSPIGYLGLLSQRTRDIYISRRLLGTFTWTLSDSEGKDTPGGYCLTRWMLIEAELKCFGNTAVAKCNEKHDEEFCDMLRLFDFNKQAIQRLKAEAQMSIQLINKAVNALINDQLIMKNHLRDIMGIPYCNYSKYWYLNHTTTGRTSLPKCWLVSNGSYLNETHFSDDIEQQADNMITEMLQKEYMERQGKTPLGLVDLFVFSTSFYLISIFLHLVKIPTHRHIVGKSCPKPHRLNHMGICSCGLYKQPGVPVKWKR.

Gly-2 is lipidated: N-myristoyl glycine; by host. Over 2–17 (GQIVTFFQEVPHVIEE) the chain is Extracellular. Residues 18–33 (VMNIVLIALSVLAVLK) traverse the membrane as a helical segment. Over 34-58 (GLYNFATCGLVGLVTFLLLCGRSCT) the chain is Cytoplasmic. Cys-57 provides a ligand contact to Zn(2+). Residues 59 to 432 (TSLYKGVYEL…QGKTPLGLVD (374 aa)) are Extracellular-facing. N-linked (GlcNAc...) asparagine; by host glycosylation is found at Asn-79, Asn-89, Asn-99, Asn-109, Asn-119, and Asn-167. Disulfide bonds link Cys-86–Cys-231, Cys-118–Cys-155, Cys-180–Cys-212, Cys-279–Cys-292, Cys-301–Cys-310, and Cys-364–Cys-385. Residue Asn-224 is glycosylated (N-linked (GlcNAc...) asparagine; by host). N-linked (GlcNAc...) asparagine; by host glycans are attached at residues Asn-365, Asn-373, Asn-390, and Asn-395. The chain crosses the membrane as a helical span at residues 433-453 (LFVFSTSFYLISIFLHLVKIP). The Cytoplasmic segment spans residues 454–491 (THRHIVGKSCPKPHRLNHMGICSCGLYKQPGVPVKWKR). 6 residues coordinate Zn(2+): His-455, His-457, Cys-463, His-467, Cys-475, and Cys-477.

The protein belongs to the arenaviridae GPC protein family. Interacts with glycoprotein G2. Part of the GP complex (GP-C) together with glycoprotein G1 and glycoprotein G2. The GP-complex interacts with protein Z, which interacts with ribonucleocapsid; these interactions may induce virion budding. As to quaternary structure, homotrimer; disulfide-linked. In pre-fusion state, G1 homotrimers bind G2 homotrimers via ionic interactions. Part of the GP complex (GP-C) together with glycoprotein G2 and the stable signal peptide. Interacts with the primary host receptor DAG1 on the cell surface; this interaction occurs at pH 8.0 but not at pH 6.0 and below. Upon virus internalization and at endosomal pH, interacts with the host lysosomal protein LAMP1; this interaction mediates G1 dissociation from GP-C and membrane fusion. The GP-complex interacts with protein Z, which interacts with ribonucleocapsid; these interactions may induce virion budding. In terms of assembly, homotrimer. Interacts with the stable signal peptide. In pre-fusion state, G2 homotrimers bind G1 homotrimers via ionic interactions. Part of the GP complex (GP-C) together with glycoprotein G1 and the stable signal peptide. Acidification in the endosome triggers rearrangements, which ultimately leads to a 6 helix bundle formed by the two heptad repeat domains (HR1 and HR2) in post-fusion state. The GP-complex interacts with protein Z, which interacts with ribonucleocapsid; these interactions may induce virion budding. Post-translationally, specific enzymatic cleavages in vivo yield mature proteins. GP-C polyprotein is cleaved in the endoplasmic reticulum by the host protease MBTPS1. Only cleaved glycoprotein is incorporated into virions. The SSP remains stably associated with the GP complex following cleavage by signal peptidase and plays crucial roles in the trafficking of GP through the secretory pathway. In terms of processing, myristoylation is necessary for GP2-mediated fusion activity.

It is found in the virion membrane. Its subcellular location is the host endoplasmic reticulum membrane. It localises to the host Golgi apparatus membrane. The protein resides in the host cell membrane. Its function is as follows. Functions as a cleaved signal peptide that is retained as the third component of the GP complex (GP-C). Helps to stabilize the spike complex in its native conformation. The SSP is required for efficient glycoprotein expression, post-translational maturation cleavage of G1 and G2, glycoprotein transport to the cell surface plasma membrane, formation of infectious virus particles, and acid pH-dependent glycoprotein-mediated cell fusion. Forms the virion spikes together with glycoprotein G2. The glycoprotein spike trimers are connected to the underlying matrix. Interacts with the host receptor. Mediates virus attachment to the host primary receptor alpha-dystroglycan DAG1 (alpha-DG) at the cell surface. This attachment induces virion internalization apparently through macropinocytosis. Following endocytosis, there is a pH-dependent switch from binding DAG1 to the host lysosomal receptor LAMP1. This latter binding triggers the dissociation of GP1, exposing the fusion subunit, GP2, such that fusion can occur. Down-modulates host DAG1. In terms of biological role, forms the virion spikes together with glycoprotein G1. The glycoprotein spike trimers are connected to the underlying matrix. Class I viral fusion protein that directs fusion of viral and host endosomal membranes, leading to delivery of the nucleocapsid into the cytoplasm. Membrane fusion is mediated by irreversible conformational changes induced by acidification. This Homo sapiens (Human) protein is Pre-glycoprotein polyprotein GP complex.